The primary structure comprises 101 residues: Large ribosomal subunit protein uL23 (101 aa).

Belongs to the universal ribosomal protein uL23 family. As to quaternary structure, part of the 50S ribosomal subunit. Contacts protein L29, and trigger factor when it is bound to the ribosome.

In terms of biological role, one of the early assembly proteins it binds 23S rRNA. One of the proteins that surrounds the polypeptide exit tunnel on the outside of the ribosome. Forms the main docking site for trigger factor binding to the ribosome. The polypeptide is Large ribosomal subunit protein uL23 (Rhodococcus jostii (strain RHA1)).